The sequence spans 164 residues: R-phycoerythrin alpha chain (164 aa).

The (2R,3E)-phycoerythrobilin site is built by Asn-47, Lys-81, Cys-82, Arg-84, His-88, Arg-137, Cys-139, and Arg-142.

This sequence belongs to the phycobiliprotein family. As to quaternary structure, heterododecamer of 6 alpha and 6 beta chains. The basic functional unit of phycobiliproteins is a ring-shaped hexamer formed from two back-to-back trimers contacting via the alpha chain subunits. The trimers are composed of alpha/beta subunit heterodimers arranged around a three-fold axis of symmetry. The phycoerythrins also contain a gamma subunit which is located in the center of the hexamer. Post-translationally, contains two covalently linked phycoerythrobilin chromophores.

It is found in the plastid. It localises to the chloroplast thylakoid membrane. Light-harvesting photosynthetic tetrapyrrole chromophore-protein from the phycobiliprotein complex. The chain is R-phycoerythrin alpha chain (cpeA) from Griffithsia monilis (Red alga).